The primary structure comprises 358 residues: Uroporphyrinogen decarboxylase (358 aa).

Substrate-binding positions include 28 to 32, Asp78, Tyr154, Ser208, and His324; that span reads RQAGR.

Belongs to the uroporphyrinogen decarboxylase family. In terms of assembly, homodimer.

The protein localises to the cytoplasm. The catalysed reaction is uroporphyrinogen III + 4 H(+) = coproporphyrinogen III + 4 CO2. The protein operates within porphyrin-containing compound metabolism; protoporphyrin-IX biosynthesis; coproporphyrinogen-III from 5-aminolevulinate: step 4/4. In terms of biological role, catalyzes the decarboxylation of four acetate groups of uroporphyrinogen-III to yield coproporphyrinogen-III. This chain is Uroporphyrinogen decarboxylase, found in Acidiphilium cryptum (strain JF-5).